Consider the following 198-residue polypeptide: Imidazole glycerol phosphate synthase subunit HisH (198 aa).

Residues 1–194 (MIAIIDYGLG…LKGGFQDDQT (194 aa)) enclose the Glutamine amidotransferase type-1 domain. Catalysis depends on Cys-77, which acts as the Nucleophile. Residues His-169 and Glu-171 contribute to the active site.

As to quaternary structure, heterodimer of HisH and HisF.

It is found in the cytoplasm. The catalysed reaction is 5-[(5-phospho-1-deoxy-D-ribulos-1-ylimino)methylamino]-1-(5-phospho-beta-D-ribosyl)imidazole-4-carboxamide + L-glutamine = D-erythro-1-(imidazol-4-yl)glycerol 3-phosphate + 5-amino-1-(5-phospho-beta-D-ribosyl)imidazole-4-carboxamide + L-glutamate + H(+). It carries out the reaction L-glutamine + H2O = L-glutamate + NH4(+). The protein operates within amino-acid biosynthesis; L-histidine biosynthesis; L-histidine from 5-phospho-alpha-D-ribose 1-diphosphate: step 5/9. Its function is as follows. IGPS catalyzes the conversion of PRFAR and glutamine to IGP, AICAR and glutamate. The HisH subunit catalyzes the hydrolysis of glutamine to glutamate and ammonia as part of the synthesis of IGP and AICAR. The resulting ammonia molecule is channeled to the active site of HisF. The protein is Imidazole glycerol phosphate synthase subunit HisH of Staphylococcus saprophyticus subsp. saprophyticus (strain ATCC 15305 / DSM 20229 / NCIMB 8711 / NCTC 7292 / S-41).